Consider the following 80-residue polypeptide: Small ribosomal subunit protein bS18 (80 aa).

It belongs to the bacterial ribosomal protein bS18 family. Part of the 30S ribosomal subunit. Forms a tight heterodimer with protein bS6.

Binds as a heterodimer with protein bS6 to the central domain of the 16S rRNA, where it helps stabilize the platform of the 30S subunit. This Acholeplasma laidlawii (strain PG-8A) protein is Small ribosomal subunit protein bS18.